Consider the following 187-residue polypeptide: Large ribosomal subunit protein uL5 (187 aa).

It belongs to the universal ribosomal protein uL5 family. Part of the 50S ribosomal subunit; part of the 5S rRNA/L5/L18/L25 subcomplex. Contacts the 5S rRNA and the P site tRNA. Forms a bridge to the 30S subunit in the 70S ribosome.

Its function is as follows. This is one of the proteins that bind and probably mediate the attachment of the 5S RNA into the large ribosomal subunit, where it forms part of the central protuberance. In the 70S ribosome it contacts protein S13 of the 30S subunit (bridge B1b), connecting the 2 subunits; this bridge is implicated in subunit movement. Contacts the P site tRNA; the 5S rRNA and some of its associated proteins might help stabilize positioning of ribosome-bound tRNAs. The protein is Large ribosomal subunit protein uL5 of Ruegeria sp. (strain TM1040) (Silicibacter sp.).